Here is a 459-residue protein sequence, read N- to C-terminus: Bifunctional protein GlmU (459 aa).

The pyrophosphorylase stretch occupies residues 1–229; it reads MSNFAIILAA…FDESLGVNDR (229 aa). Residues 8 to 11, Lys-22, Gln-72, and 77 to 78 contribute to the UDP-N-acetyl-alpha-D-glucosamine site; these read LAAG and GT. Asp-102 serves as a coordination point for Mg(2+). Residues Gly-139, Glu-154, Asn-169, and Asn-227 each coordinate UDP-N-acetyl-alpha-D-glucosamine. Residue Asn-227 participates in Mg(2+) binding. The segment at 230-250 is linker; that stretch reads VALATAESVMRRRINHKHMVN. The N-acetyltransferase stretch occupies residues 251 to 459; that stretch reads GVSFVNPEAT…TRLPHHPKNQ (209 aa). UDP-N-acetyl-alpha-D-glucosamine is bound by residues Arg-332 and Lys-350. Catalysis depends on His-362, which acts as the Proton acceptor. Residues Tyr-365 and Asn-376 each contribute to the UDP-N-acetyl-alpha-D-glucosamine site. Residues Ala-379, 385-386, Ser-404, Ala-422, and Arg-439 contribute to the acetyl-CoA site; that span reads NY.

The protein in the N-terminal section; belongs to the N-acetylglucosamine-1-phosphate uridyltransferase family. It in the C-terminal section; belongs to the transferase hexapeptide repeat family. In terms of assembly, homotrimer. It depends on Mg(2+) as a cofactor.

It is found in the cytoplasm. The catalysed reaction is alpha-D-glucosamine 1-phosphate + acetyl-CoA = N-acetyl-alpha-D-glucosamine 1-phosphate + CoA + H(+). It catalyses the reaction N-acetyl-alpha-D-glucosamine 1-phosphate + UTP + H(+) = UDP-N-acetyl-alpha-D-glucosamine + diphosphate. Its pathway is nucleotide-sugar biosynthesis; UDP-N-acetyl-alpha-D-glucosamine biosynthesis; N-acetyl-alpha-D-glucosamine 1-phosphate from alpha-D-glucosamine 6-phosphate (route II): step 2/2. The protein operates within nucleotide-sugar biosynthesis; UDP-N-acetyl-alpha-D-glucosamine biosynthesis; UDP-N-acetyl-alpha-D-glucosamine from N-acetyl-alpha-D-glucosamine 1-phosphate: step 1/1. It participates in bacterial outer membrane biogenesis; LPS lipid A biosynthesis. Its function is as follows. Catalyzes the last two sequential reactions in the de novo biosynthetic pathway for UDP-N-acetylglucosamine (UDP-GlcNAc). The C-terminal domain catalyzes the transfer of acetyl group from acetyl coenzyme A to glucosamine-1-phosphate (GlcN-1-P) to produce N-acetylglucosamine-1-phosphate (GlcNAc-1-P), which is converted into UDP-GlcNAc by the transfer of uridine 5-monophosphate (from uridine 5-triphosphate), a reaction catalyzed by the N-terminal domain. The sequence is that of Bifunctional protein GlmU from Streptococcus pneumoniae (strain Taiwan19F-14).